A 232-amino-acid chain; its full sequence is Phosphatidylserine decarboxylase proenzyme (232 aa).

S190 functions as the Schiff-base intermediate with substrate; via pyruvic acid in the catalytic mechanism. S190 bears the Pyruvic acid (Ser); by autocatalysis mark.

This sequence belongs to the phosphatidylserine decarboxylase family. PSD-A subfamily. Heterodimer of a large membrane-associated beta subunit and a small pyruvoyl-containing alpha subunit. Requires pyruvate as cofactor. In terms of processing, is synthesized initially as an inactive proenzyme. Formation of the active enzyme involves a self-maturation process in which the active site pyruvoyl group is generated from an internal serine residue via an autocatalytic post-translational modification. Two non-identical subunits are generated from the proenzyme in this reaction, and the pyruvate is formed at the N-terminus of the alpha chain, which is derived from the carboxyl end of the proenzyme. The post-translation cleavage follows an unusual pathway, termed non-hydrolytic serinolysis, in which the side chain hydroxyl group of the serine supplies its oxygen atom to form the C-terminus of the beta chain, while the remainder of the serine residue undergoes an oxidative deamination to produce ammonia and the pyruvoyl prosthetic group on the alpha chain.

It is found in the cell membrane. The catalysed reaction is a 1,2-diacyl-sn-glycero-3-phospho-L-serine + H(+) = a 1,2-diacyl-sn-glycero-3-phosphoethanolamine + CO2. It functions in the pathway phospholipid metabolism; phosphatidylethanolamine biosynthesis; phosphatidylethanolamine from CDP-diacylglycerol: step 2/2. Catalyzes the formation of phosphatidylethanolamine (PtdEtn) from phosphatidylserine (PtdSer). This Agrobacterium fabrum (strain C58 / ATCC 33970) (Agrobacterium tumefaciens (strain C58)) protein is Phosphatidylserine decarboxylase proenzyme.